A 104-amino-acid polypeptide reads, in one-letter code: Replication restart protein PriB (104 aa).

The SSB domain occupies 1 to 101 (MTNRLVLSGT…LHAEQIELID (101 aa)).

The protein belongs to the PriB family. As to quaternary structure, homodimer. Interacts with PriA and DnaT. Component of the replication restart primosome. Primosome assembly occurs via a 'hand-off' mechanism. PriA binds to replication forks, subsequently PriB then DnaT bind; DnaT then displaces ssDNA to generate the helicase loading substrate.

Functionally, involved in the restart of stalled replication forks, which reloads the replicative helicase on sites other than the origin of replication; the PriA-PriB pathway is the major replication restart pathway. During primosome assembly it facilitates complex formation between PriA and DnaT on DNA; stabilizes PriA on DNA. Stimulates the DNA unwinding activity of PriA helicase. This Shigella dysenteriae serotype 1 (strain Sd197) protein is Replication restart protein PriB.